A 284-amino-acid chain; its full sequence is D-tagatose-1,6-bisphosphate aldolase subunit GatY (284 aa).

Asp-82 serves as the catalytic Proton donor. Residues His-83 and His-180 each coordinate Zn(2+). Residue Gly-181 coordinates dihydroxyacetone phosphate. Zn(2+) is bound at residue His-208. Dihydroxyacetone phosphate is bound by residues Gly-209–Ser-211 and Asn-230–Thr-233.

It belongs to the class II fructose-bisphosphate aldolase family. TagBP aldolase GatY subfamily. As to quaternary structure, forms a complex with GatZ. It depends on Zn(2+) as a cofactor.

The catalysed reaction is D-tagatofuranose 1,6-bisphosphate = D-glyceraldehyde 3-phosphate + dihydroxyacetone phosphate. Its pathway is carbohydrate metabolism; D-tagatose 6-phosphate degradation; D-glyceraldehyde 3-phosphate and glycerone phosphate from D-tagatose 6-phosphate: step 2/2. Its function is as follows. Catalytic subunit of the tagatose-1,6-bisphosphate aldolase GatYZ, which catalyzes the reversible aldol condensation of dihydroxyacetone phosphate (DHAP or glycerone-phosphate) with glyceraldehyde 3-phosphate (G3P) to produce tagatose 1,6-bisphosphate (TBP). Requires GatZ subunit for full activity and stability. Is involved in the catabolism of galactitol. The protein is D-tagatose-1,6-bisphosphate aldolase subunit GatY of Shigella dysenteriae serotype 1 (strain Sd197).